A 138-amino-acid chain; its full sequence is Proline-rich protein 34 (138 aa).

Residues 22–37 (SAPTSPPNPATRPAPG) show a composition bias toward pro residues. 2 disordered regions span residues 22–55 (SAPT…PTRG) and 81–107 (APRL…SPAR).

This chain is Proline-rich protein 34 (PRR34), found in Homo sapiens (Human).